The chain runs to 654 residues: Fimbrin-2 (654 aa).

4 consecutive Calponin-homology (CH) domains span residues 124 to 241 (DSEK…KIQL), 269 to 372 (LPPE…QHRN), 394 to 500 (SREE…RYNI), and 515 to 623 (EITD…YWTL). 2 actin-binding regions span residues 124-372 (DSEK…QHRN) and 394-623 (SREE…YWTL).

In terms of assembly, interacts with F-actin.

It is found in the cytoplasm. The protein resides in the cytoskeleton. Functionally, cross-links actin filaments (F-actin). Stabilizes and prevents F-actin depolymerization mediated by profilin. May regulate actin cytoarchitecture, cell cycle, cell division, cell elongation and cytoplasmic tractus. In Arabidopsis thaliana (Mouse-ear cress), this protein is Fimbrin-2.